A 209-amino-acid chain; its full sequence is Large ribosomal subunit protein bL25 (209 aa).

The segment at 190 to 209 (LKSEEAASEGAAEEEAKDGE) is disordered. Positions 200-209 (AAEEEAKDGE) are enriched in acidic residues.

The protein belongs to the bacterial ribosomal protein bL25 family. CTC subfamily. In terms of assembly, part of the 50S ribosomal subunit; part of the 5S rRNA/L5/L18/L25 subcomplex. Contacts the 5S rRNA. Binds to the 5S rRNA independently of L5 and L18.

Its function is as follows. This is one of the proteins that binds to the 5S RNA in the ribosome where it forms part of the central protuberance. This chain is Large ribosomal subunit protein bL25, found in Brucella anthropi (strain ATCC 49188 / DSM 6882 / CCUG 24695 / JCM 21032 / LMG 3331 / NBRC 15819 / NCTC 12168 / Alc 37) (Ochrobactrum anthropi).